A 155-amino-acid polypeptide reads, in one-letter code: Phosphopantetheine adenylyltransferase (155 aa).

This sequence belongs to the eukaryotic CoaD family.

The protein localises to the cytoplasm. The enzyme catalyses (R)-4'-phosphopantetheine + ATP + H(+) = 3'-dephospho-CoA + diphosphate. The protein operates within cofactor biosynthesis; coenzyme A biosynthesis. Its function is as follows. Reversibly transfers an adenylyl group from ATP to 4'-phosphopantetheine, yielding dephospho-CoA (dPCoA) and pyrophosphate. This Pyrobaculum aerophilum (strain ATCC 51768 / DSM 7523 / JCM 9630 / CIP 104966 / NBRC 100827 / IM2) protein is Phosphopantetheine adenylyltransferase.